A 463-amino-acid polypeptide reads, in one-letter code: Membrane-bound lytic murein transglycosylase F (463 aa).

The N-terminal stretch at 1 to 33 is a signal peptide; the sequence is MQSQDYKKRLKLQIIIILSIAVMSCGVPNVPTA. The non-LT domain stretch occupies residues 34 to 272; that stretch reads LSSLLERESI…VLEDKYFGHI (239 aa). The segment at 273 to 463 is LT domain; it reads RQFDYVDSRA…LVWLDEQGKI (191 aa). Glutamate 317 is a catalytic residue.

The protein in the N-terminal section; belongs to the bacterial solute-binding protein 3 family. In the C-terminal section; belongs to the transglycosylase Slt family.

Its subcellular location is the cell outer membrane. The enzyme catalyses Exolytic cleavage of the (1-&gt;4)-beta-glycosidic linkage between N-acetylmuramic acid (MurNAc) and N-acetylglucosamine (GlcNAc) residues in peptidoglycan, from either the reducing or the non-reducing ends of the peptidoglycan chains, with concomitant formation of a 1,6-anhydrobond in the MurNAc residue.. Murein-degrading enzyme that degrades murein glycan strands and insoluble, high-molecular weight murein sacculi, with the concomitant formation of a 1,6-anhydromuramoyl product. Lytic transglycosylases (LTs) play an integral role in the metabolism of the peptidoglycan (PG) sacculus. Their lytic action creates space within the PG sacculus to allow for its expansion as well as for the insertion of various structures such as secretion systems and flagella. The polypeptide is Membrane-bound lytic murein transglycosylase F (Alteromonas mediterranea (strain DSM 17117 / CIP 110805 / LMG 28347 / Deep ecotype)).